Reading from the N-terminus, the 189-residue chain is Ribosome maturation factor RimM (189 aa).

A PRC barrel domain is found at 95–169 (DEDEFFQTDL…IIKVEPHAAG (75 aa)). The segment at 168 to 189 (AGLIADEHDNPPHESGKKPKKP) is disordered. Positions 172–189 (ADEHDNPPHESGKKPKKP) are enriched in basic and acidic residues.

The protein belongs to the RimM family. In terms of assembly, binds ribosomal protein uS19.

It is found in the cytoplasm. Its function is as follows. An accessory protein needed during the final step in the assembly of 30S ribosomal subunit, possibly for assembly of the head region. Essential for efficient processing of 16S rRNA. May be needed both before and after RbfA during the maturation of 16S rRNA. It has affinity for free ribosomal 30S subunits but not for 70S ribosomes. This Brucella abortus (strain S19) protein is Ribosome maturation factor RimM.